Reading from the N-terminus, the 138-residue chain is Large ribosomal subunit protein bL17 (138 aa).

It belongs to the bacterial ribosomal protein bL17 family. Part of the 50S ribosomal subunit. Contacts protein L32.

In Phenylobacterium zucineum (strain HLK1), this protein is Large ribosomal subunit protein bL17.